Reading from the N-terminus, the 161-residue chain is Phenolic acid decarboxylase PadC (161 aa).

The substrate site is built by Tyr11 and Tyr13. Tyr19 functions as the Proton donor in the catalytic mechanism. Arg41 is a binding site for substrate. The Proton acceptor role is filled by Glu64.

This sequence belongs to the PadC family. As to quaternary structure, homodimer.

It catalyses the reaction (E)-4-coumarate + H(+) = 4-vinylphenol + CO2. The catalysed reaction is (E)-cinnamate + H(+) = styrene + CO2. It carries out the reaction (E)-ferulate + H(+) = 2-methoxy-4-vinylphenol + CO2. Its function is as follows. Involved in the decarboxylation and detoxification of phenolic derivatives. It is able to catalyze the decarboxylation of ferulic, p-coumaric and caffeic acids. The polypeptide is Phenolic acid decarboxylase PadC (padC) (Bacillus subtilis (strain 168)).